We begin with the raw amino-acid sequence, 738 residues long: Polyribonucleotide nucleotidyltransferase (738 aa).

Residues Asp514 and Asp520 each contribute to the Mg(2+) site. In terms of domain architecture, KH spans 580–639 (PRIITVKIPVDKIGEVIGPKGKMINQIQEDTGAEITIEDDGTIYIGAQVGSQAEAARATI). Positions 651-723 (GERYLGTVVK…SRGKLSLIPV (73 aa)) constitute an S1 motif domain.

Belongs to the polyribonucleotide nucleotidyltransferase family. The cofactor is Mg(2+).

The protein localises to the cytoplasm. The enzyme catalyses RNA(n+1) + phosphate = RNA(n) + a ribonucleoside 5'-diphosphate. In terms of biological role, involved in mRNA degradation. Catalyzes the phosphorolysis of single-stranded polyribonucleotides processively in the 3'- to 5'-direction. In Streptomyces avermitilis (strain ATCC 31267 / DSM 46492 / JCM 5070 / NBRC 14893 / NCIMB 12804 / NRRL 8165 / MA-4680), this protein is Polyribonucleotide nucleotidyltransferase.